The following is a 206-amino-acid chain: Ribosomal RNA small subunit methyltransferase G (206 aa).

S-adenosyl-L-methionine-binding positions include G74, L79, 125-126, and R140; that span reads VE.

Belongs to the methyltransferase superfamily. RNA methyltransferase RsmG family.

It is found in the cytoplasm. It catalyses the reaction guanosine(527) in 16S rRNA + S-adenosyl-L-methionine = N(7)-methylguanosine(527) in 16S rRNA + S-adenosyl-L-homocysteine. In terms of biological role, specifically methylates the N7 position of guanine in position 527 of 16S rRNA. The sequence is that of Ribosomal RNA small subunit methyltransferase G from Shewanella putrefaciens (strain CN-32 / ATCC BAA-453).